Consider the following 424-residue polypeptide: Serine--tRNA ligase (424 aa).

230–232 contacts L-serine; sequence TAE. Position 261-263 (261-263) interacts with ATP; the sequence is RSE. E284 is a binding site for L-serine. Residue 348–351 participates in ATP binding; sequence EISS. An L-serine-binding site is contributed by S384.

The protein belongs to the class-II aminoacyl-tRNA synthetase family. Type-1 seryl-tRNA synthetase subfamily. As to quaternary structure, homodimer. The tRNA molecule binds across the dimer.

It localises to the cytoplasm. It carries out the reaction tRNA(Ser) + L-serine + ATP = L-seryl-tRNA(Ser) + AMP + diphosphate + H(+). The enzyme catalyses tRNA(Sec) + L-serine + ATP = L-seryl-tRNA(Sec) + AMP + diphosphate + H(+). It participates in aminoacyl-tRNA biosynthesis; selenocysteinyl-tRNA(Sec) biosynthesis; L-seryl-tRNA(Sec) from L-serine and tRNA(Sec): step 1/1. Functionally, catalyzes the attachment of serine to tRNA(Ser). Is also able to aminoacylate tRNA(Sec) with serine, to form the misacylated tRNA L-seryl-tRNA(Sec), which will be further converted into selenocysteinyl-tRNA(Sec). This Desulfatibacillum aliphaticivorans protein is Serine--tRNA ligase.